The sequence spans 155 residues: Ribonuclease H (155 aa).

The RNase H type-1 domain maps to 1–142 (MLKQVEIFTD…CDELARAAAM (142 aa)). Residues Asp-10, Glu-48, Asp-70, and Asp-134 each coordinate Mg(2+).

Belongs to the RNase H family. In terms of assembly, monomer. Mg(2+) serves as cofactor.

It localises to the cytoplasm. The catalysed reaction is Endonucleolytic cleavage to 5'-phosphomonoester.. Functionally, endonuclease that specifically degrades the RNA of RNA-DNA hybrids. This is Ribonuclease H from Escherichia fergusonii (strain ATCC 35469 / DSM 13698 / CCUG 18766 / IAM 14443 / JCM 21226 / LMG 7866 / NBRC 102419 / NCTC 12128 / CDC 0568-73).